The sequence spans 182 residues: NADH-quinone oxidoreductase subunit I (182 aa).

2 4Fe-4S ferredoxin-type domains span residues 52–82 (LTRD…LQKA) and 92–121 (DFFR…LTPD). Cysteine 62, cysteine 65, cysteine 68, cysteine 72, cysteine 101, cysteine 104, cysteine 107, and cysteine 111 together coordinate [4Fe-4S] cluster.

This sequence belongs to the complex I 23 kDa subunit family. In terms of assembly, NDH-1 is composed of 13 different subunits. Subunits NuoA, H, J, K, L, M, N constitute the membrane sector of the complex. It depends on [4Fe-4S] cluster as a cofactor.

It localises to the cell inner membrane. The enzyme catalyses a quinone + NADH + 5 H(+)(in) = a quinol + NAD(+) + 4 H(+)(out). Functionally, NDH-1 shuttles electrons from NADH, via FMN and iron-sulfur (Fe-S) centers, to quinones in the respiratory chain. The immediate electron acceptor for the enzyme in this species is believed to be ubiquinone. Couples the redox reaction to proton translocation (for every two electrons transferred, four hydrogen ions are translocated across the cytoplasmic membrane), and thus conserves the redox energy in a proton gradient. This chain is NADH-quinone oxidoreductase subunit I, found in Pseudomonas fluorescens (strain Pf0-1).